Reading from the N-terminus, the 101-residue chain is Small ribosomal subunit protein uS14 (101 aa).

The interval 1-26 (MAKVSSIQKNKSRQKKSQSLHNKRSE) is disordered. Basic residues predominate over residues 10-22 (NKSRQKKSQSLHN).

The protein belongs to the universal ribosomal protein uS14 family. Part of the 30S ribosomal subunit. Contacts proteins S3 and S10.

Functionally, binds 16S rRNA, required for the assembly of 30S particles and may also be responsible for determining the conformation of the 16S rRNA at the A site. The chain is Small ribosomal subunit protein uS14 from Rickettsia prowazekii (strain Madrid E).